Reading from the N-terminus, the 134-residue chain is Small ribosomal subunit protein uS11 (134 aa).

The protein belongs to the universal ribosomal protein uS11 family. Component of the small ribosomal subunit.

It localises to the cytoplasm. The protein is Small ribosomal subunit protein uS11 (RPS14) of Encephalitozoon cuniculi (strain GB-M1) (Microsporidian parasite).